A 278-amino-acid chain; its full sequence is MTEIKVPIAGVIGNPITHSRSPHLHRHWLHVYGIEGYYVPLHVQGQDLAEVFHALPKLGFKGVNVTLPFKERAIELADRVSDRAALIGAANTITFQPDGTIHADNTDGYGFIENLRNGAPGWSPRAAAIVVLGAGGAARGVLSALLEAGAPEVRLANRTRAKAEALRSDFGPRVTVVDWHGVSGTMEDAETLVNTTSLGMTGQPDLELNLDALPRSAVVTDIVYRPLMTPLLEQAVARGNPVVDGLGMLLFQAAPGFERWFGVRPEITPELRAAALAE.

Shikimate is bound by residues 19-21 and Thr66; that span reads SRS. Lys70 acts as the Proton acceptor in catalysis. An NADP(+)-binding site is contributed by Asp82. The shikimate site is built by Asn91 and Asp107. NADP(+) is bound by residues 133–137, 157–162, and Ile222; these read GAGGA and NRTRAK. Position 224 (Tyr224) interacts with shikimate. Gly245 is an NADP(+) binding site.

Belongs to the shikimate dehydrogenase family. In terms of assembly, homodimer.

It carries out the reaction shikimate + NADP(+) = 3-dehydroshikimate + NADPH + H(+). The protein operates within metabolic intermediate biosynthesis; chorismate biosynthesis; chorismate from D-erythrose 4-phosphate and phosphoenolpyruvate: step 4/7. Its function is as follows. Involved in the biosynthesis of the chorismate, which leads to the biosynthesis of aromatic amino acids. Catalyzes the reversible NADPH linked reduction of 3-dehydroshikimate (DHSA) to yield shikimate (SA). The protein is Shikimate dehydrogenase (NADP(+)) of Dinoroseobacter shibae (strain DSM 16493 / NCIMB 14021 / DFL 12).